The following is a 398-amino-acid chain: Phosphoglycerate kinase (398 aa).

Residues 22-24 (DFN), Arg-38, 61-64 (HLGR), Arg-120, and Arg-153 each bind substrate. Residues Lys-204, Glu-326, and 352 to 355 (GGDT) each bind ATP.

The protein belongs to the phosphoglycerate kinase family. As to quaternary structure, monomer.

Its subcellular location is the cytoplasm. It carries out the reaction (2R)-3-phosphoglycerate + ATP = (2R)-3-phospho-glyceroyl phosphate + ADP. It participates in carbohydrate degradation; glycolysis; pyruvate from D-glyceraldehyde 3-phosphate: step 2/5. The polypeptide is Phosphoglycerate kinase (Geobacter metallireducens (strain ATCC 53774 / DSM 7210 / GS-15)).